We begin with the raw amino-acid sequence, 103 residues long: Large ribosomal subunit protein bL21 (103 aa).

This sequence belongs to the bacterial ribosomal protein bL21 family. Part of the 50S ribosomal subunit. Contacts protein L20.

In terms of biological role, this protein binds to 23S rRNA in the presence of protein L20. This Lactobacillus johnsonii (strain CNCM I-12250 / La1 / NCC 533) protein is Large ribosomal subunit protein bL21.